A 175-amino-acid polypeptide reads, in one-letter code: Bifunctional protein PyrR (175 aa).

Substrate-binding positions include 40–41 (TR), 102–110 (DDVLYTGRT), Arg-135, and Val-159. Residues 98 to 110 (VIIIDDVLYTGRT) carry the PRPP-binding motif.

The protein belongs to the purine/pyrimidine phosphoribosyltransferase family. PyrR subfamily. In terms of assembly, homodimer and homohexamer; in equilibrium.

The enzyme catalyses UMP + diphosphate = 5-phospho-alpha-D-ribose 1-diphosphate + uracil. Its function is as follows. Regulates transcriptional attenuation of the pyrimidine nucleotide (pyr) operon by binding in a uridine-dependent manner to specific sites on pyr mRNA. This disrupts an antiterminator hairpin in the RNA and favors formation of a downstream transcription terminator, leading to a reduced expression of downstream genes. Also displays a weak uracil phosphoribosyltransferase activity which is not physiologically significant. This Staphylococcus haemolyticus (strain JCSC1435) protein is Bifunctional protein PyrR.